The primary structure comprises 97 residues: Aspartyl/glutamyl-tRNA(Asn/Gln) amidotransferase subunit C (97 aa).

It belongs to the GatC family. Heterotrimer of A, B and C subunits.

It carries out the reaction L-glutamyl-tRNA(Gln) + L-glutamine + ATP + H2O = L-glutaminyl-tRNA(Gln) + L-glutamate + ADP + phosphate + H(+). It catalyses the reaction L-aspartyl-tRNA(Asn) + L-glutamine + ATP + H2O = L-asparaginyl-tRNA(Asn) + L-glutamate + ADP + phosphate + 2 H(+). Functionally, allows the formation of correctly charged Asn-tRNA(Asn) or Gln-tRNA(Gln) through the transamidation of misacylated Asp-tRNA(Asn) or Glu-tRNA(Gln) in organisms which lack either or both of asparaginyl-tRNA or glutaminyl-tRNA synthetases. The reaction takes place in the presence of glutamine and ATP through an activated phospho-Asp-tRNA(Asn) or phospho-Glu-tRNA(Gln). This is Aspartyl/glutamyl-tRNA(Asn/Gln) amidotransferase subunit C from Listeria monocytogenes serotype 4b (strain CLIP80459).